Reading from the N-terminus, the 470-residue chain is GDP-Man:Man(3)GlcNAc(2)-PP-Dol alpha-1,2-mannosyltransferase (470 aa).

Over 1 to 15 (MSDTVISLISHSITT) the chain is Lumenal. The helical transmembrane segment at 16–36 (VFYLVPLIIALIIPFSLYSGF) threads the bilayer. At 37 to 131 (RRKSKTVAFF…HYKHCTMLFQ (95 aa)) the chain is on the cytoplasmic side. The helical intramembrane region spans 132–152 (ALAGLILALEAWFRMVPAVFI). The Cytoplasmic segment spans residues 153–378 (DSMGYPLSLP…ISIHTMHNEH (226 aa)). The helical intramembrane region spans 379-399 (FGISVVEAMAASTIILSNDSG). The Cytoplasmic portion of the chain corresponds to 400-470 (GPRMDIVKDY…HWNKEIEKVL (71 aa)).

The protein belongs to the glycosyltransferase group 1 family. Glycosyltransferase 4 subfamily.

The protein resides in the endoplasmic reticulum membrane. The enzyme catalyses an alpha-D-Man-(1-&gt;3)-[alpha-D-Man-(1-&gt;6)]-beta-D-Man-(1-&gt;4)-beta-D-GlcNAc-(1-&gt;4)-alpha-D-GlcNAc-diphospho-di-trans,poly-cis-dolichol + 2 GDP-alpha-D-mannose = an alpha-D-Man-(1-&gt;2)-alpha-D-Man-(1-&gt;2)-alpha-D-Man-(1-&gt;3)-[alpha-D-Man-(1-&gt;6)]-beta-D-Man-(1-&gt;4)-beta-D-GlcNAc-(1-&gt;4)-alpha-D-GlcNAc-diphospho-di-trans,poly-cis-dolichol + 2 GDP + 2 H(+). The protein operates within protein modification; protein glycosylation. GDP-Man:Man(3)GlcNAc(2)-PP-Dol alpha-1,2-mannosyltransferase that operates in the biosynthetic pathway of dolichol-linked oligosaccharides, the glycan precursors employed in protein asparagine (N)-glycosylation. The assembly of dolichol-linked oligosaccharides begins on the cytosolic side of the endoplasmic reticulum membrane and finishes in its lumen. The sequential addition of sugars to dolichol pyrophosphate produces dolichol-linked oligosaccharides containing fourteen sugars, including two GlcNAcs, nine mannoses and three glucoses. Once assembled, the oligosaccharide is transferred from the lipid to nascent proteins by oligosaccharyltransferases. Catalyzes, on the cytoplasmic face of the endoplasmic reticulum, the addition of the fourth and fifth mannose residues to the dolichol-linked oligosaccharide chain, to produce Man(5)GlcNAc(2)-PP-dolichol core oligosaccharide. Man(5)GlcNAc(2)-PP-dolichol is a substrate for ALG3, the following enzyme in the biosynthetic pathway. This chain is GDP-Man:Man(3)GlcNAc(2)-PP-Dol alpha-1,2-mannosyltransferase, found in Caenorhabditis elegans.